The primary structure comprises 526 residues: Outer capsid protein VP5 (526 aa).

Residues 1-42 (MGKIIKSLSRFGKKVGNALTSNTAKKIYSTIGKAAERFAESE) are involved in membrane permeabilization.

The protein belongs to the orbivirus VP5 family.

It localises to the virion. VP5 protein is one of the two proteins (with VP2) which constitute the virus particle outer capsid. Acts as a membrane permeabilization protein that mediates release of viral particles from endosomal compartments into the cytoplasm. Permeabilization activity is probably negatively regulated by VP2 and is triggered by endosomal degradation of VP2 and exposure to low pH. This is Outer capsid protein VP5 (Segment-6) from Bluetongue virus 11 (isolate USA) (BTV 11).